Consider the following 119-residue polypeptide: Movement protein TGB2 (119 aa).

Residues Met1–Lys13 lie on the Cytoplasmic side of the membrane. Residues Tyr14–Asn34 traverse the membrane as a helical segment. At Gln35–Thr79 the chain is on the lumenal side. Residues Phe80–Phe100 traverse the membrane as a helical segment. The Cytoplasmic portion of the chain corresponds to Thr101 to Gly119.

It belongs to the virgaviridae/benyvirus TGB2 movement protein family. As to quaternary structure, interacts with movement protein TGB3. TGB1-TGB3-TGB2 complex formation is enhanced by ATP hydrolysis.

It localises to the host cell junction. Its subcellular location is the host plasmodesma. The protein resides in the host endoplasmic reticulum membrane. The protein localises to the host cytoplasm. It is found in the host cytoskeleton. It localises to the host chloroplast envelope. In terms of biological role, participates in the transport of viral genome to neighboring plant cells directly through plasmodesmata, without any budding. TGBp2 and TGBp3 are necessary for intracellular delivery of TGBp1-containing vRNPs to plasmodesmata. Can gate plasmodesmata and increase their size exclusion limit. To a lesser extent than TGB3, induces host actin cytoskeleton network thickening, which probably plays a major role in virus cell-to-cell movement. Binds ssRNA in a sequence non-specific manner. This chain is Movement protein TGB2, found in Potato mop-top virus (isolate Potato/Sweden/Sw) (PMTV).